Consider the following 569-residue polypeptide: CUE domain-containing protein 5 (569 aa).

The region spanning 17-60 (MAEKARATLKEAFPNTDDAIIRAVLAASGYKLEPAFNALLGLSD) is the CUE domain. Disordered stretches follow at residues 67–139 (MEQA…DDYS), 175–275 (DGEE…SSSA), and 311–569 (EELE…GKET). Basic and acidic residues predominate over residues 79-100 (AAHDDPVQRQLEEDERCARELA). Residues 104 to 113 (NSHRPERRRK) show a composition bias toward basic residues. The span at 234–249 (SDPHMLNEKDFERLRL) shows a compositional bias: basic and acidic residues. Over residues 250 to 274 (ESSSSPMMRRSSLNSNRRSVESSSS) the composition is skewed to low complexity. Residues 329–340 (VVVEKKPDESRK) are compositionally biased toward basic and acidic residues. Residues 347-364 (ETVSEEQMGSSNAKSKVL) show a composition bias toward polar residues. Composition is skewed to basic and acidic residues over residues 367–381 (EPKD…KTET), 399–500 (ISEK…KETD), and 507–558 (KEEK…KIEE).

The protein resides in the cytoplasm. The polypeptide is CUE domain-containing protein 5 (Schizosaccharomyces pombe (strain 972 / ATCC 24843) (Fission yeast)).